A 335-amino-acid polypeptide reads, in one-letter code: Mycobacterial beta-ketoacyl-[acyl-carrier-protein] synthase III (335 aa).

Active-site residues include C122 and H258. An ACP-binding region spans residues 259 to 263 (QANSR). Residue N289 is part of the active site.

The protein belongs to the thiolase-like superfamily. FabH family. As to quaternary structure, homodimer.

It is found in the cytoplasm. It carries out the reaction malonyl-[ACP] + dodecanoyl-CoA + H(+) = 3-oxotetradecanoyl-[ACP] + CO2 + CoA. Its pathway is lipid metabolism; fatty acid biosynthesis. It functions in the pathway lipid metabolism; mycolic acid biosynthesis. Its function is as follows. Catalyzes the condensation reaction of fatty acid synthesis by the addition to an acyl acceptor of two carbons from malonyl-ACP. Catalyzes the first condensation reaction which initiates fatty acid synthesis and may therefore play a role in governing the total rate of fatty acid production. Possesses both acetoacetyl-ACP synthase and acetyl transacylase activities. Its substrate specificity determines the biosynthesis of branched-chain and/or straight-chain of fatty acids. This chain is Mycobacterial beta-ketoacyl-[acyl-carrier-protein] synthase III, found in Mycobacterium bovis (strain ATCC BAA-935 / AF2122/97).